A 61-amino-acid polypeptide reads, in one-letter code: Large ribosomal subunit protein uL30 (61 aa).

It belongs to the universal ribosomal protein uL30 family. As to quaternary structure, part of the 50S ribosomal subunit.

The sequence is that of Large ribosomal subunit protein uL30 from Parafrankia sp. (strain EAN1pec).